We begin with the raw amino-acid sequence, 201 residues long: Recombination protein RecR (201 aa).

The segment at 60 to 75 adopts a C4-type zinc-finger fold; the sequence is CRRCGNVDVCDPCTIC. Residues 83-178 enclose the Toprim domain; it reads RTLVVVADVG…RVTRLAQGVP (96 aa).

The protein belongs to the RecR family.

In terms of biological role, may play a role in DNA repair. It seems to be involved in an RecBC-independent recombinational process of DNA repair. It may act with RecF and RecO. This chain is Recombination protein RecR, found in Xanthobacter autotrophicus (strain ATCC BAA-1158 / Py2).